The sequence spans 352 residues: Rhodopsin (352 aa).

Residues 1-36 lie on the Extracellular side of the membrane; that stretch reads MNGTEGPFFYIPMVNTTGIVRSPYEYPQYYLVNPAA. 2 N-linked (GlcNAc...) asparagine glycosylation sites follow: N2 and N15. The helical transmembrane segment at 37 to 61 threads the bilayer; sequence YAALGAYMFFLILTGFPINFLTLYV. Residues 62–73 are Cytoplasmic-facing; that stretch reads TLEHKKLRTALN. The chain crosses the membrane as a helical span at residues 74–96; the sequence is LILLNLAVADLFMVFGGFTTTMY. Over 97–110 the chain is Extracellular; it reads TSMHGYFVLGRLGC. C110 and C187 form a disulfide bridge. A helical transmembrane segment spans residues 111-133; sequence NVEGFFATLGGEIALWSLVVLAV. The short motif at 134–136 is the 'Ionic lock' involved in activated form stabilization element; the sequence is ERW. The Cytoplasmic segment spans residues 134–152; the sequence is ERWVVVCKPISNFRFTENH. The chain crosses the membrane as a helical span at residues 153 to 173; sequence AIMGVAFSWIMAATCAVPPLV. The Extracellular segment spans residues 174 to 202; the sequence is GWSRYIPEGMQCSCGVDYYTRAEGFNNES. A helical transmembrane segment spans residues 203–224; sequence FVIYMFIVHFLAPLIVIFFCYG. Topologically, residues 225-252 are cytoplasmic; that stretch reads RLLCAVKEAAAAQQESETTQRAEREVTR. The helical transmembrane segment at 253–274 threads the bilayer; that stretch reads MVIIMVIGFLTSWLPYASVAWY. Over 275 to 286 the chain is Extracellular; the sequence is IFTHQGTEFGPL. A helical transmembrane segment spans residues 287–308; that stretch reads FMTIPAFFAKSSALYNPMIYIC. K296 carries the N6-(retinylidene)lysine modification. Residues 309–352 lie on the Cytoplasmic side of the membrane; sequence MNKQFRHCMITTLCCGKNPFEEEEGASTTKTEASSVSSSSVSPA. Residues C322 and C323 are each lipidated (S-palmitoyl cysteine). The segment at 331-352 is disordered; it reads EEGASTTKTEASSVSSSSVSPA. Positions 342–352 are enriched in low complexity; the sequence is SSVSSSSVSPA.

This sequence belongs to the G-protein coupled receptor 1 family. Opsin subfamily. Phosphorylated on some or all of the serine and threonine residues present in the C-terminal region. Post-translationally, contains one covalently linked retinal chromophore.

The protein localises to the membrane. It is found in the cell projection. It localises to the cilium. The protein resides in the photoreceptor outer segment. Its function is as follows. Photoreceptor required for image-forming vision at low light intensity. While most salt water fish species use retinal as chromophore, most freshwater fish use 3-dehydroretinal, or a mixture of retinal and 3-dehydroretinal. Light-induced isomerization of 11-cis to all-trans retinal triggers a conformational change that activates signaling via G-proteins. Subsequent receptor phosphorylation mediates displacement of the bound G-protein alpha subunit by arrestin and terminates signaling. This Pomatoschistus minutus (Sand goby) protein is Rhodopsin (rho).